The chain runs to 276 residues: Large ribosomal subunit protein uL2 (276 aa).

Over residues 28–38 (RPEKSLTEKLS) the composition is skewed to basic and acidic residues. Disordered stretches follow at residues 28–57 (RPEKSLTEKLSKKGGRNNQGRLTVRHQGGG) and 219–276 (TVRG…RRKK).

The protein belongs to the universal ribosomal protein uL2 family. In terms of assembly, part of the 50S ribosomal subunit. Forms a bridge to the 30S subunit in the 70S ribosome.

Its function is as follows. One of the primary rRNA binding proteins. Required for association of the 30S and 50S subunits to form the 70S ribosome, for tRNA binding and peptide bond formation. It has been suggested to have peptidyltransferase activity; this is somewhat controversial. Makes several contacts with the 16S rRNA in the 70S ribosome. In Exiguobacterium sp. (strain ATCC BAA-1283 / AT1b), this protein is Large ribosomal subunit protein uL2.